A 380-amino-acid chain; its full sequence is Alkanesulfonate monooxygenase (380 aa).

Belongs to the SsuD family. In terms of assembly, homotetramer.

It catalyses the reaction an alkanesulfonate + FMNH2 + O2 = an aldehyde + FMN + sulfite + H2O + 2 H(+). Catalyzes the desulfonation of aliphatic sulfonates. This is Alkanesulfonate monooxygenase from Pectobacterium atrosepticum (strain SCRI 1043 / ATCC BAA-672) (Erwinia carotovora subsp. atroseptica).